Consider the following 123-residue polypeptide: Holo-[acyl-carrier-protein] synthase (123 aa).

Mg(2+) is bound by residues Asp8 and Glu60.

Belongs to the P-Pant transferase superfamily. AcpS family. Requires Mg(2+) as cofactor.

It localises to the cytoplasm. It catalyses the reaction apo-[ACP] + CoA = holo-[ACP] + adenosine 3',5'-bisphosphate + H(+). Its function is as follows. Transfers the 4'-phosphopantetheine moiety from coenzyme A to a Ser of acyl-carrier-protein. The chain is Holo-[acyl-carrier-protein] synthase from Ehrlichia ruminantium (strain Gardel).